We begin with the raw amino-acid sequence, 462 residues long: MAQLSAMDVYNLLPKANCGACGCKTCMEFATKLVNREAKPEDCPKLDDESLEKLQELLAPPVKELTIGEGDREVTVGGDEVMFRHELSFFNPPPVFVTVYDDMEEDEIAGKTEEIQEFQVERVGEVLKLDGVAVVSRTGDPEKYARAVEIAVERSEDLAVALITTDPKVMEAGLDVFDERPLLYPATEENVEDLAKLAADGDCPLGLHARDVEDLVPLVVEAQQYTDDLLLDPGTEFGPHDVVSTTDKLAEIRKAAIEEFESFGYPTLVTTFPYAFLEDDPVKAARRESYLASACVLRYADILIMDTVEPWALLPVLTQRQCVYTDPREPQEVEPGLYRIGDPDENSPVLVTTNFTLTYHCVAGDLESADIDCWLLVIDTGGLAVDVSVAGGQFTGEAVKEVIEETDIEDKVEHRVLVIPGKAAAVKGDVEDATGWDVMIGTQDSSELPEFLEKEGLLRIEE.

Residues 1–60 (MAQLSAMDVYNLLPKANCGACGCKTCMEFATKLVNREAKPEDCPKLDDESLEKLQELLAP) form the 4Fe-4S domain. Positions 18, 21, 26, and 43 each coordinate [4Fe-4S] cluster.

In terms of assembly, heterodimer of delta and gamma chains. The ACDS complex is made up of alpha, epsilon, beta, gamma and delta chains with a probable stoichiometry of (alpha(2)epsilon(2))(4)-beta(8)-(gamma(1)delta(1))(8). Corrinoid serves as cofactor. The cofactor is [4Fe-4S] cluster.

It catalyses the reaction 5,6,7,8-tetrahydrosarcinapterin + methyl-Co(III)-[corrinoid Fe-S protein] = 5-methyltetrahydrosarcinapterin + Co(I)-[corrinoid Fe-S protein] + H(+). Functionally, part of a complex that catalyzes the reversible cleavage of acetyl-CoA, allowing autotrophic growth from CO(2). The chain is Acetyl-CoA decarbonylase/synthase complex subunit gamma from Methanopyrus kandleri (strain AV19 / DSM 6324 / JCM 9639 / NBRC 100938).